A 276-amino-acid polypeptide reads, in one-letter code: Diaminopimelate epimerase (276 aa).

Positions 13, 46, and 66 each coordinate substrate. The Proton donor role is filled by C75. Residues 76-77 (GN), N159, N192, and 210-211 (ER) contribute to the substrate site. The active-site Proton acceptor is C219. Residue 220–221 (GT) participates in substrate binding.

This sequence belongs to the diaminopimelate epimerase family. Homodimer.

The protein resides in the cytoplasm. The catalysed reaction is (2S,6S)-2,6-diaminopimelate = meso-2,6-diaminopimelate. It functions in the pathway amino-acid biosynthesis; L-lysine biosynthesis via DAP pathway; DL-2,6-diaminopimelate from LL-2,6-diaminopimelate: step 1/1. Catalyzes the stereoinversion of LL-2,6-diaminopimelate (L,L-DAP) to meso-diaminopimelate (meso-DAP), a precursor of L-lysine and an essential component of the bacterial peptidoglycan. This Cellvibrio japonicus (strain Ueda107) (Pseudomonas fluorescens subsp. cellulosa) protein is Diaminopimelate epimerase.